Here is a 115-residue protein sequence, read N- to C-terminus: Large ribosomal subunit protein bL20 (115 aa).

This sequence belongs to the bacterial ribosomal protein bL20 family.

Functionally, binds directly to 23S ribosomal RNA and is necessary for the in vitro assembly process of the 50S ribosomal subunit. It is not involved in the protein synthesizing functions of that subunit. The chain is Large ribosomal subunit protein bL20 from Synechococcus sp. (strain CC9902).